The primary structure comprises 188 residues: Large ribosomal subunit protein uL6 (188 aa).

It belongs to the universal ribosomal protein uL6 family. In terms of assembly, part of the 50S ribosomal subunit.

Its function is as follows. This protein binds to the 23S rRNA, and is important in its secondary structure. It is located near the subunit interface in the base of the L7/L12 stalk, and near the tRNA binding site of the peptidyltransferase center. This is Large ribosomal subunit protein uL6 from Myxococcus xanthus (strain DK1622).